We begin with the raw amino-acid sequence, 336 residues long: Mitochondrial fission regulator 2 (336 aa).

Residues 139-166 (QPDALLKISALEEELQRLRAQIATIITA) are a coiled coil. The disordered stretch occupies residues 296–336 (HRQRDDSFGKENHSAEPSPFSSPDTPRIFQHTRRSQGRIHL). Residues 297 to 309 (RQRDDSFGKENHS) are compositionally biased toward basic and acidic residues. A compositionally biased stretch (basic residues) spans 325-336 (QHTRRSQGRIHL).

This sequence belongs to the MTFR1 family.

It localises to the mitochondrion. May play a role in mitochondrial aerobic respiration. Can also promote mitochondrial fission. The chain is Mitochondrial fission regulator 2 (mtfr2) from Danio rerio (Zebrafish).